A 383-amino-acid polypeptide reads, in one-letter code: S-adenosylmethionine synthase (383 aa).

Residue His15 participates in ATP binding. Residue Asp17 participates in Mg(2+) binding. Residue Glu43 participates in K(+) binding. Glu56 and Gln99 together coordinate L-methionine. The tract at residues 99-109 (QSPDINQGVDR) is flexible loop. ATP contacts are provided by residues 164 to 166 (DAK), 230 to 231 (RF), Asp239, 245 to 246 (RK), Ala262, and Lys266. Asp239 is a binding site for L-methionine. Residue Lys270 participates in L-methionine binding.

The protein belongs to the AdoMet synthase family. In terms of assembly, homotetramer; dimer of dimers. Mg(2+) is required as a cofactor. Requires K(+) as cofactor.

The protein resides in the cytoplasm. It carries out the reaction L-methionine + ATP + H2O = S-adenosyl-L-methionine + phosphate + diphosphate. It functions in the pathway amino-acid biosynthesis; S-adenosyl-L-methionine biosynthesis; S-adenosyl-L-methionine from L-methionine: step 1/1. Catalyzes the formation of S-adenosylmethionine (AdoMet) from methionine and ATP. The overall synthetic reaction is composed of two sequential steps, AdoMet formation and the subsequent tripolyphosphate hydrolysis which occurs prior to release of AdoMet from the enzyme. The polypeptide is S-adenosylmethionine synthase (Shewanella baltica (strain OS155 / ATCC BAA-1091)).